The chain runs to 498 residues: UPF0371 protein cauri_2449 (498 aa).

It belongs to the UPF0371 family.

This Corynebacterium aurimucosum (strain ATCC 700975 / DSM 44827 / CIP 107346 / CN-1) (Corynebacterium nigricans) protein is UPF0371 protein cauri_2449.